The chain runs to 298 residues: Protoheme IX farnesyltransferase (298 aa).

A run of 9 helical transmembrane segments spans residues 16–36 (VVAL…PDMP), 45–65 (ALGF…NQLL), 93–113 (VFAG…VNVI), 114–134 (TAVL…VYLK), 141–161 (IVIG…AVTG), 172–192 (SLLV…LAIF), 223–243 (VLLA…VFYL), 244–264 (GGAV…LNPP), and 277–297 (IVYL…LPWV).

It belongs to the UbiA prenyltransferase family. Protoheme IX farnesyltransferase subfamily.

It is found in the cell inner membrane. The catalysed reaction is heme b + (2E,6E)-farnesyl diphosphate + H2O = Fe(II)-heme o + diphosphate. It functions in the pathway porphyrin-containing compound metabolism; heme O biosynthesis; heme O from protoheme: step 1/1. Converts heme B (protoheme IX) to heme O by substitution of the vinyl group on carbon 2 of heme B porphyrin ring with a hydroxyethyl farnesyl side group. This chain is Protoheme IX farnesyltransferase, found in Xanthomonas oryzae pv. oryzae (strain MAFF 311018).